The chain runs to 314 residues: 4-hydroxy-3-methylbut-2-enyl diphosphate reductase (314 aa).

[4Fe-4S] cluster is bound at residue Cys12. Residues His41 and His74 each coordinate (2E)-4-hydroxy-3-methylbut-2-enyl diphosphate. Dimethylallyl diphosphate is bound by residues His41 and His74. His41 and His74 together coordinate isopentenyl diphosphate. Cys96 contributes to the [4Fe-4S] cluster binding site. Position 124 (His124) interacts with (2E)-4-hydroxy-3-methylbut-2-enyl diphosphate. Position 124 (His124) interacts with dimethylallyl diphosphate. His124 is a binding site for isopentenyl diphosphate. Glu126 acts as the Proton donor in catalysis. Thr167 is a (2E)-4-hydroxy-3-methylbut-2-enyl diphosphate binding site. Residue Cys197 coordinates [4Fe-4S] cluster. Residues Ser225, Ser226, Asn227, and Ser269 each contribute to the (2E)-4-hydroxy-3-methylbut-2-enyl diphosphate site. Dimethylallyl diphosphate-binding residues include Ser225, Ser226, Asn227, and Ser269. Isopentenyl diphosphate contacts are provided by Ser225, Ser226, Asn227, and Ser269.

Belongs to the IspH family. [4Fe-4S] cluster serves as cofactor.

It catalyses the reaction isopentenyl diphosphate + 2 oxidized [2Fe-2S]-[ferredoxin] + H2O = (2E)-4-hydroxy-3-methylbut-2-enyl diphosphate + 2 reduced [2Fe-2S]-[ferredoxin] + 2 H(+). The enzyme catalyses dimethylallyl diphosphate + 2 oxidized [2Fe-2S]-[ferredoxin] + H2O = (2E)-4-hydroxy-3-methylbut-2-enyl diphosphate + 2 reduced [2Fe-2S]-[ferredoxin] + 2 H(+). Its pathway is isoprenoid biosynthesis; dimethylallyl diphosphate biosynthesis; dimethylallyl diphosphate from (2E)-4-hydroxy-3-methylbutenyl diphosphate: step 1/1. It participates in isoprenoid biosynthesis; isopentenyl diphosphate biosynthesis via DXP pathway; isopentenyl diphosphate from 1-deoxy-D-xylulose 5-phosphate: step 6/6. Functionally, catalyzes the conversion of 1-hydroxy-2-methyl-2-(E)-butenyl 4-diphosphate (HMBPP) into a mixture of isopentenyl diphosphate (IPP) and dimethylallyl diphosphate (DMAPP). Acts in the terminal step of the DOXP/MEP pathway for isoprenoid precursor biosynthesis. In Haemophilus influenzae (strain PittEE), this protein is 4-hydroxy-3-methylbut-2-enyl diphosphate reductase.